The primary structure comprises 519 residues: Cell division cycle protein 20 homolog B (519 aa).

The interval 77-106 is disordered; sequence WQLSPARDPESSSSVEEGPPSHTPESLASG. Positions 87–96 are enriched in low complexity; the sequence is SSSSVEEGPP. WD repeat units lie at residues 229 to 266, 271 to 310, 353 to 392, 399 to 441, 443 to 484, and 487 to 519; these read RNDY…WIEN, VCCH…QLRN, YHKE…GVQG, PQST…NIQT, STQS…RSGG, and GHRD…WKCC.

The protein belongs to the WD repeat CDC20/Fizzy family. Expressed in multiciliated cells (MCCs).

Its subcellular location is the cytoplasm. Its function is as follows. Protein regulator of centriole-deuterosome disengagement and subsequently participates in the ciliogenesis in multiciliated cells (MCCs). The polypeptide is Cell division cycle protein 20 homolog B (Mus musculus (Mouse)).